The following is a 447-amino-acid chain: MSASKIPLFKMKDLILILCLLEMSFAVPFFPQQSGTPGMASLSLETMRQLGSLQRLNTLSQYSRYGFGKSFNSLWMHGLLPPHSSLPWMRPREHETQQYEYSLPVHPPPLPSQPSLKPQQPGLKPFLQSAAATTNQATALKEALQPPIHLGHLPLQEGELPLVQQQVAPSDKPPKPELPGVDFADPQGPSLPGMDFPDPQGPSLPGLDFADPQGSTIFQIARLISHGPMPQNKQSPLYPGMLYVPFGANQLNAPARLGIMSSEEVAGGREDPMAYGAMFPGFGGMRPGFEGMPHNPAMGGDFTLEFDSPVAATKGPENEEGGAQGSPMPEANPDNLENPAFLTELEPAPHAGLLALPKDDIPGLPRSPSGKMKGLPSVTPAAADPLMTPELADVYRTYDADMTTSVDFQEEATMDTTMAPNSLQTSMPGNKAQEPEMMHDAWHFQEP.

A signal peptide spans 1–26 (MSASKIPLFKMKDLILILCLLEMSFA). Pro37 carries the post-translational modification Hydroxyproline. Ser43 is modified (phosphoserine). O-linked (GalNAc...) serine glycosylation occurs at Ser112. 3 disordered regions span residues 165-211 (QQVA…DFAD), 307-338 (DSPV…NLEN), and 353-383 (LLAL…PAAA). A run of 2 repeats spans residues 189–201 (PSLP…DPQG) and 202–214 (PSLP…DPQG).

The protein belongs to the ameloblastin family. Ameloblast-specific. Located at the Tomes processes of secretory ameloblasts and in the sheath space between rod-interrod enamel.

It localises to the secreted. It is found in the extracellular space. The protein resides in the extracellular matrix. Functionally, involved in the mineralization and structural organization of enamel. The protein is Ameloblastin (AMBN) of Homo sapiens (Human).